The primary structure comprises 347 residues: Sesquiterpene synthase M422DRAFT_47084 (347 aa).

Residues aspartate 93, asparagine 228, serine 232, and glutamate 236 each coordinate Mg(2+). The DDXXD motif motif lies at 93-97 (DEYTD). (2E,6E)-farnesyl diphosphate contacts are provided by arginine 318 and tyrosine 319.

This sequence belongs to the terpene synthase family. It depends on Mg(2+) as a cofactor.

It carries out the reaction (2E,6E)-farnesyl diphosphate = viridiflorene + diphosphate. In terms of biological role, terpene cyclase that catalyzes the cyclization of farnesyl diphosphate (FPP) to viridiflorene and viridiflorol. This is Sesquiterpene synthase M422DRAFT_47084 from Sphaerobolus stellatus (strain SS14).